We begin with the raw amino-acid sequence, 341 residues long: Major histocompatibility complex class I-related protein 1 (341 aa).

Positions 1–22 are cleaved as a signal peptide; that stretch reads MGELMAFLLPLIIVLMVKHSDS. Residues 23–109 are alpha-1; sequence RTHSLRYFRL…KRLQRHYNHS (87 aa). The segment at 23-201 is antigen-binding cleft; that stretch reads RTHSLRYFRL…EYGKDTLQRT (179 aa). At 23–302 the chain is on the extracellular side; it reads RTHSLRYFRL…QESETIPLVM (280 aa). Positions 31, 46, and 65 each coordinate 5-(2-oxoethylideneamino)-6-(D-ribitylamino)uracil. 5-(2-oxopropylideneamino)-6-(D-ribitylamino)uracil is bound by residues arginine 31, serine 46, and lysine 65. 7-hydroxy-6-methyl-8-(1-D-ribityl)lumazine contacts are provided by arginine 31, serine 46, and lysine 65. Arginine 31 contributes to the 8-(9H-purin-6-yl)-2-oxa-8-azabicyclo[3.3.1]nona-3,6-diene-4,6-dicarbaldehyde binding site. Residues lysine 65 and histidine 80 each contribute to the 8-(9H-purin-6-yl)-2-oxa-8-azabicyclo[3.3.1]nona-3,6-diene-4,6-dicarbaldehyde site. Lysine 65 provides a ligand contact to 2-amino-4-oxopteridine-6-carbaldehyde. Lysine 65 contacts pyridoxal. An N-linked (GlcNAc...) asparagine glycan is attached at asparagine 107. The interval 110–201 is alpha-2; that stretch reads GSHTYQRMIG…EYGKDTLQRT (92 aa). 5-(2-oxoethylideneamino)-6-(D-ribitylamino)uracil-binding residues include arginine 116, tyrosine 174, and glutamine 175. 3 residues coordinate 5-(2-oxopropylideneamino)-6-(D-ribitylamino)uracil: arginine 116, tyrosine 174, and glutamine 175. 3 residues coordinate 7-hydroxy-6-methyl-8-(1-D-ribityl)lumazine: arginine 116, tyrosine 174, and glutamine 175. Arginine 116 serves as a coordination point for 8-(9H-purin-6-yl)-2-oxa-8-azabicyclo[3.3.1]nona-3,6-diene-4,6-dicarbaldehyde. Disulfide bonds link cysteine 120–cysteine 183 and cysteine 222–cysteine 278. The alpha-3 stretch occupies residues 202–293; sequence EPPLVRVNRK…GVHMVLQVPQ (92 aa). One can recognise an Ig-like C1-type domain in the interval 203 to 299; sequence PPLVRVNRKE…QVPQESETIP (97 aa). The segment at 294–302 is connecting peptide; the sequence is ESETIPLVM. The chain crosses the membrane as a helical span at residues 303–323; it reads KAVSGSIVLVIVLAGVGVLVW. At 324–341 the chain is on the cytoplasmic side; it reads RRRPREQNGAIYLPTPDR.

This sequence belongs to the MHC class I family. In terms of assembly, heterotrimer that consists of MR1, B2M and a metabolite antigen. Major classes of metabolite ligands presented by MR1 include riboflavin-related antigens, pyrimidines and ribityl lumazines, nucleobase adducts and folate derivatives. Forms reversible covalent Schiff base complexes with microbial pyrimidine-based metabolite, which serves as a molecular switch triggering complete folding, stable association with B2M and translocation of the ternary complex from endoplasmic reticulum to the plasma membrane. Alternatively, forms non-Schiff base complexes with ribityl lumazines. On antigen-presenting cells, the ternary complex interacts with TCR on MR1-restricted T cells, predominantly represented by CD8-positive and CD4- and CD8-double negative MAIT cell subsets. Interacts with TAPBP and TAPBPL chaperones in the endoplasmic reticulum. TAPBP associated or not with MHC class I peptide loading complex binds ligand-free MR1 or MR1-B2M complex, providing for stable MR1 pools ready for metabolite antigen processing. TAPBPL interacts with MR1 in a ligand-independent way; this interaction may stabilize MR1 pool and facilitate ligand loading and dissociation. MR1-B2M heterodimer adopts a topology similar to classical MHC class I molecules, with alpha-1 and alpha-2 domains of MR1 forming the antigen-binding cleft composed of two alpha-helices resting on a floor of 7-stranded anti-parallel beta-pleated sheet. The ribityl moiety of pyrimidine-based antigens is recognized by Tyr-95 residue in the CDR3 alpha loop of the invariant TRAV1-2 TCR. Homodimerizes and does not associate with B2M. Post-translationally, N-glycosylated. In terms of tissue distribution, ubiquitous. Low expression is detected in peripheral blood B cells, T cells, monocytes and in bronchial epithelial cells (at protein level). Expressed in plasmablasts or plasma B cells in the lamina propria of ileum, appendix and colon (at protein level). Highly expressed on a subset of CD45-positive CD3-positive thymocytes (at protein level).

The protein resides in the cell membrane. The protein localises to the endoplasmic reticulum membrane. Its subcellular location is the golgi apparatus membrane. It localises to the early endosome membrane. It is found in the late endosome membrane. The protein resides in the secreted. Inhibited by pterin-based metabolites such as 6-formylpterin (6-FP, a product of folic acid photodegradation). 6-FP competitively inhibits MAIT cell activation by 5-OP-RU. Modulated by commonly prescribed anti-inflammatory drug metabolites. Inhibited by salicilates such as 3-formylsalicylic and 5-formylsalicylic acids. Activated by diclofenac and/or its hydroxy metabolites. In terms of biological role, antigen-presenting molecule specialized in displaying microbial pyrimidine-based metabolites to alpha-beta T cell receptors (TCR) on innate-type mucosal-associated invariant T (MAIT) cells. In complex with B2M preferentially presents riboflavin-derived metabolites to semi-invariant TRAV1.2 TCRs on MAIT cells, guiding immune surveillance of the microbial metabolome at mucosal epithelial barriers. Signature pyrimidine-based microbial antigens are generated via non-enzymatic condensation of metabolite intermediates of the riboflavin pathway with by-products arising from other metabolic pathways such as glycolysis. Typical potent antigenic metabolites are 5-(2-oxoethylideneamino)-6-D-ribitylaminouracil (5-OE-RU) and 5-(2-oxopropylideneamino)-6-D-ribitylaminouracil (5-OP-RU), products of condensation of 5-amino-6-D-ribityaminouracil (5-A-RU) with glyoxal or methylglyoxal by-products, respectively. May present microbial antigens to various TRAV1-2-negative MAIT cell subsets, providing for unique recognition of diverse microbes, including pathogens that do not synthesize riboflavin. Upon antigen recognition, elicits rapid innate-type MAIT cell activation to eliminate pathogenic microbes by directly killing infected cells. During T cell development, drives thymic selection and post-thymic terminal differentiation of MAIT cells in a process dependent on commensal microflora. Acts as an immune sensor of cancer cell metabolome. May present a tumor-specific or -associated metabolite essential for cancer cell survival to a 'pan-cancer' TCR consisting of TRAV38.2-DV8*TRAJ31 alpha chain paired with a TRBV25.1*TRBJ2.3 beta chain on a non-MAIT CD8-positive T cell clone (MC.7.G5), triggering T cell-mediated killing of a wide range of cancer cell types. Allele MR1*01: Presents microbial-derived metabolite 5-OP-RU to semi-invariant TRAV1.2-TRAJ33-TRBV6.1 (A-F7) TCR on MAIT cells. Presents nucleobase carbonyl adducts generated during oxidative stress. Captures M3Ade, a nucleobase adduct composed of one adenine modified by a malondialdehyde trimer, for recognition by MR1-restricted T cell clones expressing a polyclonal TCR repertoire. Displays moderate binding affinity toward tumor-enriched pyridoxal and pyridoxal 5'-phosphate antigens. Functionally, allele MR1*04: Presents tumor-enriched metabolite pyridoxal to pan-cancer 7.G5 TCR on T cells enabling preferential recognition of cancer cells. May act as an alloantigen. The polypeptide is Major histocompatibility complex class I-related protein 1 (Homo sapiens (Human)).